Consider the following 882-residue polypeptide: Chondroitin sulfate synthase 3 (882 aa).

Residues 1–7 (MAVRSRR) are Cytoplasmic-facing. The chain crosses the membrane as a helical; Signal-anchor for type II membrane protein span at residues 8–28 (PWMSVALGLVLGFTAASWLIA). Residues 29–882 (PRVAELSERK…LGVRYNRTLS (854 aa)) lie on the Lumenal side of the membrane. Residues 46-167 (SYYGRSAAGP…GDGGAAAPSA (122 aa)) form a disordered region. Low complexity-rich tracts occupy residues 59–69 (AQQPLPQPQSR) and 120–131 (GATGLPGAPAAE). N-linked (GlcNAc...) asparagine glycans are attached at residues N155, N279, and N710. A divalent metal cation is bound by residues D720 and H834. N878 is a glycosylation site (N-linked (GlcNAc...) asparagine).

Belongs to the chondroitin N-acetylgalactosaminyltransferase family. The cofactor is Co(2+). Mn(2+) serves as cofactor. It depends on Cd(2+) as a cofactor. Detected at low levels in brain, cerebral cortex, uterus and small intestine.

It localises to the golgi apparatus. Its subcellular location is the golgi stack membrane. It catalyses the reaction 3-O-(beta-D-GlcA-(1-&gt;3)-beta-D-GalNAc-(1-&gt;4)-beta-D-GlcA-(1-&gt;3)-beta-D-Gal-(1-&gt;3)-beta-D-Gal-(1-&gt;4)-beta-D-Xyl)-L-seryl-[protein] + UDP-N-acetyl-alpha-D-galactosamine = 3-O-(beta-D-GalNAc-(1-&gt;4)-beta-D-GlcA-(1-&gt;3)-beta-D-GalNAc-(1-&gt;4)-beta-D-GlcA-(1-&gt;3)-beta-D-Gal-(1-&gt;3)-beta-D-Gal-(1-&gt;4)-beta-D-Xyl)-L-seryl-[protein] + UDP + H(+). The enzyme catalyses 3-O-{beta-D-GlcA-(1-&gt;3)-[beta-D-GalNAc-(1-&gt;4)-beta-D-GlcA-(1-&gt;3)](n)-beta-D-GalNAc-(1-&gt;4)-beta-D-GlcA-(1-&gt;3)-beta-D-Gal-(1-&gt;3)-beta-D-Gal-(1-&gt;4)-beta-D-Xyl}-L-seryl-[protein] + UDP-N-acetyl-alpha-D-galactosamine = 3-O-{[beta-D-GalNAc-(1-&gt;4)-beta-D-GlcA-(1-&gt;3)](n+1)-beta-D-GalNAc-(1-&gt;4)-beta-D-GlcA-(1-&gt;3)-beta-D-Gal-(1-&gt;3)-beta-D-Gal-(1-&gt;4)-beta-D-Xyl}-L-seryl-[protein] + UDP + H(+). The catalysed reaction is 3-O-(beta-D-GalNAc-(1-&gt;4)-beta-D-GlcA-(1-&gt;3)-beta-D-Gal-(1-&gt;3)-beta-D-Gal-(1-&gt;4)-beta-D-Xyl)-L-seryl-[protein] + UDP-alpha-D-glucuronate = 3-O-(beta-D-GlcA-(1-&gt;3)-beta-D-GalNAc-(1-&gt;4)-beta-D-GlcA-(1-&gt;3)-beta-D-Gal-(1-&gt;3)-beta-D-Gal-(1-&gt;4)-beta-D-Xyl)-L-seryl-[protein] + UDP + H(+). It carries out the reaction 3-O-{[beta-D-GalNAc-(1-&gt;4)-beta-D-GlcA-(1-&gt;3)](n)-beta-D-GalNAc-(1-&gt;4)-beta-D-GlcA-(1-&gt;3)-beta-D-Gal-(1-&gt;3)-beta-D-Gal-(1-&gt;4)-beta-D-Xyl}-L-seryl-[protein] + UDP-alpha-D-glucuronate = 3-O-{beta-D-GlcA-(1-&gt;3)-[beta-D-GalNAc-(1-&gt;4)-beta-D-GlcA-(1-&gt;3)](n)-beta-D-GalNAc-(1-&gt;4)-beta-D-GlcA-(1-&gt;3)-beta-D-Gal-(1-&gt;3)-beta-D-Gal-(1-&gt;4)-beta-D-Xyl}-L-seryl-[protein] + UDP + H(+). Has both beta-1,3-glucuronic acid and beta-1,4-N-acetylgalactosamine transferase activity. Transfers glucuronic acid (GlcUA) from UDP-GlcUA and N-acetylgalactosamine (GalNAc) from UDP-GalNAc to the non-reducing end of the elongating chondroitin polymer. Specific activity is much reduced compared to CHSY1. This is Chondroitin sulfate synthase 3 (CHSY3) from Homo sapiens (Human).